A 776-amino-acid chain; its full sequence is Protein FAM83C (776 aa).

The interval 1 to 340 is DUF1669; the sequence is MQGCQAGASI…LYAESQPVEG (340 aa). Disordered stretches follow at residues 344-467, 494-565, 617-653, 669-694, and 716-745; these read NEDP…STSP, SRLP…SLQH, HGQL…DDRR, PFRS…VGSA, and QGAR…LFAP. The segment covering 368 to 385 has biased composition (low complexity); the sequence is SATGSSPSSNSLSSIKHS. The segment covering 452–467 has biased composition (polar residues); sequence PWSQSSPALNHSSTSP. Over residues 523–539 the composition is skewed to basic and acidic residues; that stretch reads VEEKKVSLSQSHDHLDR. Residues 554 to 563 are compositionally biased toward polar residues; the sequence is SRVTPDSSSL.

The protein belongs to the FAM83 family. Directly interacts (via DUF1669) with CSNK1A1 and CSNK1A1L. May interact with RAF1. Post-translationally, phosphorylated by CSNK1A1.

The protein resides in the cytoplasm. Functionally, may play a role in MAPK signaling. This chain is Protein FAM83C, found in Mus musculus (Mouse).